Reading from the N-terminus, the 334-residue chain is Malate dehydrogenase, cytoplasmic (334 aa).

Serine 2 is modified (N-acetylserine). NAD(+) contacts are provided by residues glycine 11–alanine 17 and aspartate 42. The substrate site is built by arginine 92 and arginine 98. Asparagine 105 lines the NAD(+) pocket. An N6-succinyllysine modification is found at lysine 110. Glutamine 112 serves as a coordination point for NAD(+). N6-acetyllysine is present on residues lysine 118 and lysine 121. Residue valine 129–asparagine 131 participates in NAD(+) binding. Substrate contacts are provided by asparagine 131 and arginine 162. Residue histidine 187 is the Proton acceptor of the active site. Residue lysine 214 is modified to N6-succinyllysine. Position 217 is a phosphoserine (serine 217). Arginine 230 carries the post-translational modification Omega-N-methylarginine. Serine 241 is subject to Phosphoserine. Residue lysine 298 is modified to N6-acetyllysine; alternate. N6-succinyllysine; alternate is present on lysine 298. Serine 309 carries the phosphoserine modification. Lysine 318 carries the N6-succinyllysine modification. Phosphoserine is present on residues serine 332 and serine 333.

Belongs to the LDH/MDH superfamily. MDH type 2 family. Homodimer. Post-translationally, ISGylated. Acetylation at Lys-118 dramatically enhances enzymatic activity and promotes adipogenic differentiation.

The protein resides in the cytoplasm. The protein localises to the cytosol. The enzyme catalyses (S)-malate + NAD(+) = oxaloacetate + NADH + H(+). The catalysed reaction is (2R)-2-hydroxy-3-(4-hydroxyphenyl)propanoate + NAD(+) = 3-(4-hydroxyphenyl)pyruvate + NADH + H(+). It catalyses the reaction (S)-2-hydroxyglutarate + NAD(+) = 2-oxoglutarate + NADH + H(+). Functionally, catalyzes the reduction of aromatic alpha-keto acids in the presence of NADH. Plays essential roles in the malate-aspartate shuttle and the tricarboxylic acid cycle, important in mitochondrial NADH supply for oxidative phosphorylation. Catalyzes the reduction of 2-oxoglutarate to 2-hydroxyglutarate, leading to elevated reactive oxygen species (ROS). The polypeptide is Malate dehydrogenase, cytoplasmic (MDH1) (Felis catus (Cat)).